Here is a 227-residue protein sequence, read N- to C-terminus: uncharacterized protein (227 aa).

Helical transmembrane passes span 113–133 (IMLI…FIVF) and 141–161 (FGIC…NGLI).

It localises to the membrane. This is an uncharacterized protein from Dictyostelium discoideum (Social amoeba).